The primary structure comprises 1497 residues: MDVTKKNKRDGTEVTERIVTETVTTRLTSLPPKGGTSNGYAKTASLGGGSRLEKQSLTHGSSGYINSTGSTRGHASTSSYRRAHSPASTLPNSPGSTFERKTHVTRHAYEGSSSGNSSPEYPRKEFASSSTRGRSQTRESEIRVRLQSASPSTRWTELDDVKRLLKGSRSASVSPTRNSSNTLPIPKKGTVETKIVTASSQSVSGTYDATILDANLPSHVWSSTLPAGSSMGTYHNNMTTQSSSLLNTNAYSAGSVFGVPNNMASCSPTLHPGLSTSSSVFGMQNNLAPSLTTLSHGTTTTSTAYGVKKNMPQSPAAVNTGVSTSAACTTSVQSDDLLHKDCKFLILEKDNTPAKKEMELLIMTKDSGKVFTASPASIAATSFSEDTLKKEKQAAYNADSGLKAEANGDLKTVSTKGKTTTADIHSYGSSGGGGSGGGGGVGGAGGGPWGPAPAWCPCGSCCSWWKWLLGLLLTWLLLLGLLFGLIALAEEVRKLKARVDELERIRRSILPYGDSMDRIEKDRLQGMAPAAGADLDKIGLHSDSQEELWMFVRKKLMMEQENGNLRGSPGPKGDMGSPGPKGDRGFPGTPGIPGPLGHPGPQGPKGQKGSVGDPGMEGPMGQRGREGPMGPRGEAGPPGSGEKGERGAAGEPGPHGPPGVPGSVGPKGSSGSPGPQGPPGPVGLQGLRGEVGLPGVKGDKGPMGPPGPKGDQGEKGPRGLTGEPGMRGLPGAVGEPGAKGAMGPAGPDGHQGPRGEQGLTGMPGIRGPPGPSGDPGKPGLTGPQGPQGLPGTPGRPGIKGEPGAPGKIVTSEGSSMLTVPGPPGPPGAMGPPGPPGAPGPAGPAGLPGHQEVLNLQGPPGPPGPRGPPGPSIPGPPGPRGPPGEGLPGPPGPPGSFLSNSETFLSGPPGPPGPPGPKGDQGPPGPRGHQGEQGLPGFSTSGSSSFGLNLQGPPGPPGPQGPKGDKGDPGVPGALGIPSGPSEGGSSSTMYVSGPPGPPGPPGPPGSISSSGQEIQQYISEYMQSDSIRSYLSGVQGPPGPPGPPGPVTTITGETFDYSELASHVVSYLRTSGYGVSLFSSSISSEDILAVLQRDDVRQYLRQYLMGPRGPPGPPGASGDGSLLSLDYAELSSRILSYMSSSGISIGLPGPPGPPGLPGTSYEELLSLLRGSEFRGIVGPPGPPGPPGIPGNVWSSISVEDLSSYLHTAGLSFIPGPPGPPGPPGPRGPPGVSGALATYAAENSDSFRSELISYLTSPDVRSFIVGPPGPPGPQGPPGDSRLLSTDASHSRGSSSSSHSSSVRRGSSYSSSMSTGGGGAGSLGAGGAFGEAAGDRGPYGTDIGPGGGYGAAAEGGMYAGNGGLLGADFAGDLDYNELAVRVSESMQRQGLLQGMAYTVQGPPGQPGPQGPPGISKVFSAYSNVTADLMDFFQTYGAIQGPPGQKGEMGTPGPKGDRGPAGPPGHPGPPGPRGHKGEKGDKGDQVYAGRRRRRSIAVKP.

Disordered stretches follow at residues 1-154 and 167-186; these read MDVT…PSTR and GSRS…LPIP. Residues 1–467 are Cytoplasmic-facing; sequence MDVTKKNKRD…CGSCCSWWKW (467 aa). The interval 1–566 is nonhelical region (NC16); it reads MDVTKKNKRD…MMEQENGNLR (566 aa). Residues 9–19 show a composition bias toward basic and acidic residues; that stretch reads RDGTEVTERIV. Composition is skewed to polar residues over residues 57-96 and 169-183; these read LTHG…SPGS and RSAS…SNTL. The segment at 145–230 is necessary for interaction with DST and for the recruitment of DST to hemidesmosome; it reads RLQSASPSTR…WSSTLPAGSS (86 aa). A helical; Signal-anchor for type II membrane protein membrane pass occupies residues 468 to 488; sequence LLGLLLTWLLLLGLLFGLIAL. The Extracellular segment spans residues 489–1497; sequence AEEVRKLKAR…RRRRSIAVKP (1009 aa). A Phosphoserine; by CK2 modification is found at serine 544. 3 disordered regions span residues 562-1011, 1209-1234, and 1261-1316; these read NGNL…SSSG, GLSF…VSGA, and SFIV…TGGG. Residues 567 to 1482 are triple-helical region; that stretch reads GSPGPKGDMG…KGEKGDKGDQ (916 aa). The span at 590 to 602 shows a compositional bias: pro residues; it reads PGIPGPLGHPGPQ. Composition is skewed to low complexity over residues 604-635, 661-673, 735-748, and 774-796; these read PKGQ…RGEA, PGSV…SGSP, EPGA…AGPD, and DPGK…PGRP. 3 stretches are compositionally biased toward pro residues: residues 820 to 841, 858 to 881, and 907 to 916; these read PGPP…PGPA, PPGP…PRGP, and PPGPPGPPGP. 2 stretches are compositionally biased toward low complexity: residues 936–946 and 968–987; these read GFSTSGSSSFG and PGVP…GSSS. Pro residues-rich tracts occupy residues 994–1004, 1214–1228, and 1266–1275; these read PPGPPGPPGPP, PGPP…PRGP, and PPGPPGPQGP. The segment covering 1289 to 1312 has biased composition (low complexity); the sequence is SRGSSSSSHSSSVRRGSSYSSSMS. An N-linked (GlcNAc...) asparagine glycan is attached at asparagine 1421. The disordered stretch occupies residues 1434–1497; the sequence is GAIQGPPGQK…RRRRSIAVKP (64 aa). Residues 1458 to 1469 show a composition bias toward pro residues; the sequence is AGPPGHPGPPGP. Over residues 1472–1481 the composition is skewed to basic and acidic residues; sequence HKGEKGDKGD. Residues 1483 to 1497 form a nonhelical region (NC1) region; that stretch reads VYAGRRRRRSIAVKP. Residues 1486–1497 are compositionally biased toward basic residues; the sequence is GRRRRRSIAVKP.

In terms of assembly, homotrimers of alpha 1(XVII)chains. Interacts (via cytoplasmic region) with ITGB4 (via cytoplasmic region). Interacts (via cytoplasmic region) with DST isoform 3 (via N-terminus). Interacts (via N-terminus) with PLEC. Interacts (via cytoplasmic region) with DSP. In terms of processing, the intracellular/endo domain is disulfide-linked. Post-translationally, prolines at the third position of the tripeptide repeating unit (G-X-Y) are hydroxylated in some or all of the chains. The ectodomain is shedded from the surface of keratinocytes resulting in a 120-kDa soluble form, also named as 120 kDa linear IgA disease antigen. The shedding is mediated by membrane-bound metalloproteases. This cleavage is inhibited by phosphorylation at Ser-544. In terms of tissue distribution, detected in skin. In the cornea, it is detected in the epithelial basement membrane, the epithelial cells, and at a lower level in stromal cells (at protein level). Stratified squamous epithelia. Found in hemidesmosomes. Expressed in cornea, oral mucosa, esophagus, intestine, kidney collecting ducts, ureter, bladder, urethra and thymus but is absent in lung, blood vessels, skeletal muscle and nerves.

It is found in the cell junction. It localises to the hemidesmosome. Its subcellular location is the membrane. The protein localises to the secreted. The protein resides in the extracellular space. It is found in the extracellular matrix. It localises to the basement membrane. May play a role in the integrity of hemidesmosome and the attachment of basal keratinocytes to the underlying basement membrane. In terms of biological role, the 120 kDa linear IgA disease antigen is an anchoring filament component involved in dermal-epidermal cohesion. Is the target of linear IgA bullous dermatosis autoantibodies. The protein is Collagen alpha-1(XVII) chain (COL17A1) of Homo sapiens (Human).